The chain runs to 160 residues: 3-dehydroquinate dehydratase (160 aa).

The Proton acceptor role is filled by Tyr28. Substrate-binding residues include Asn79, His85, and Asp92. Residue His105 is the Proton donor of the active site. Residues 106-107 (MS) and Arg116 contribute to the substrate site.

This sequence belongs to the type-II 3-dehydroquinase family. In terms of assembly, homododecamer.

The catalysed reaction is 3-dehydroquinate = 3-dehydroshikimate + H2O. Its pathway is metabolic intermediate biosynthesis; chorismate biosynthesis; chorismate from D-erythrose 4-phosphate and phosphoenolpyruvate: step 3/7. In terms of biological role, catalyzes a trans-dehydration via an enolate intermediate. The sequence is that of 3-dehydroquinate dehydratase from Gloeobacter violaceus (strain ATCC 29082 / PCC 7421).